The sequence spans 510 residues: Olfactomedin-4 (510 aa).

An N-terminal signal peptide occupies residues 1 to 20 (MRPGLSFLLALLFFLGQAAG). 2 N-linked (GlcNAc...) asparagine glycosylation sites follow: Asn-72 and Asn-136. Positions 155-234 (DFELIKVEVK…ECEASKDQNT (80 aa)) form a coiled coil. The Olfactomedin-like domain occupies 245-507 (SCGHGGVVNI…LLNYDLSVLQ (263 aa)). Cys-246 and Cys-437 form a disulfide bridge. N-linked (GlcNAc...) asparagine glycosylation occurs at Asn-253.

In terms of assembly, homomultimer; disulfide-linked. Interacts with NDUFA13. Interacts with cell surface lectins (locutions ricinus communis agglutinin I, concanavalin-A and wheat germ agglutinin) and cadherin. N-glycosylated. Expressed during myeloid lineage development. Much higher expression in bone marrow neutrophils than in peripheral blood neutrophils (at protein level). Strongly expressed in the prostate, small intestine and colon and moderately expressed in the bone marrow and stomach. Overexpressed in some pancreatic cancer tissues.

The protein localises to the secreted. The protein resides in the extracellular space. It is found in the mitochondrion. Its function is as follows. May promote proliferation of pancreatic cancer cells by favoring the transition from the S to G2/M phase. In myeloid leukemic cell lines, inhibits cell growth and induces cell differentiation and apoptosis. May play a role in the inhibition of EIF4EBP1 phosphorylation/deactivation. Facilitates cell adhesion, most probably through interaction with cell surface lectins and cadherin. This is Olfactomedin-4 (OLFM4) from Homo sapiens (Human).